A 525-amino-acid chain; its full sequence is MSRAGRQLALLLCSCCVAVAIPGGLAEEGCPAEPHQASRYVAAVYEHQSFLSPDPLALTSREQALELMHRNLDVYEQQVTTAARKGAQIIVFPEDGIHGFNFTRTSIYPFLDFMPSPRSVRWNPCLEPHRFNDTEVLQRLSCMAMKGEMFLVANLGTKQPCHSSDPGCPSDGRYQFNTNVVFSSNGTLVDRYRKHNLYFEAAFDTPLEVDHTVFDTPFAGKFGVFTCFDILFFDPAVRLLQDSEVKHVVYPTAWMNQLPLLAAIQIQRGFAIAFVINLLAANIHHPSLGMTGSGIHTPLKSFWHHSMDSPEGHLIIAEVARNPPGLISAGNATGKTDPFHRKFLQLLAGDPYSEKDAQDVHCDAAPKSTTNASPTFNSEMMYDNFTLVPVWGRDGHVHVCAHGLCCHLLYQRPTVSQELYALGVFDGLHTVHGTYYVQVCALVKCGGLGFDTCGQEITEAMGMFEFHLWGNFSTSYIFPMLLTSGMMLETPDQLGWESDQYFLKKRGLSSGLVTAALYGRLYERD.

The first 26 residues, 1 to 26, serve as a signal peptide directing secretion; that stretch reads MSRAGRQLALLLCSCCVAVAIPGGLA. Positions 54-333 constitute a CN hydrolase domain; the sequence is DPLALTSREQ…PGLISAGNAT (280 aa). Glu94 acts as the Proton acceptor in catalysis. Asn132 and Asn185 each carry an N-linked (GlcNAc...) asparagine glycan. Catalysis depends on Lys194, which acts as the Proton donor. Catalysis depends on Cys227, which acts as the Nucleophile. Asn384 is a glycosylation site (N-linked (GlcNAc...) asparagine).

This sequence belongs to the carbon-nitrogen hydrolase superfamily. BTD/VNN family.

The protein localises to the secreted. It localises to the extracellular space. The catalysed reaction is biocytin + H2O = biotin + L-lysine. The enzyme catalyses biotin amide + H2O = biotin + NH4(+). In terms of biological role, catalytic release of biotin from biocytin, the product of biotin-dependent carboxylases degradation. This chain is Biotinidase (BTD), found in Bos taurus (Bovine).